The following is a 735-amino-acid chain: Catalase-peroxidase (735 aa).

Over residues 1 to 10 (MMDGAQTNSG) the composition is skewed to polar residues. The interval 1–20 (MMDGAQTNSGGCPVMHGGGS) is disordered. Positions 100 to 228 (WHSAGTYRTY…LAAVQMGLIY (129 aa)) form a cross-link, tryptophyl-tyrosyl-methioninium (Trp-Tyr) (with M-254). Histidine 101 serves as the catalytic Proton acceptor. Residues 228 to 254 (YVNPQGPDGNPDPLASAFDIRDTFARM) constitute a cross-link (tryptophyl-tyrosyl-methioninium (Tyr-Met) (with W-100)). Histidine 269 is a heme b binding site.

It belongs to the peroxidase family. Peroxidase/catalase subfamily. Homodimer or homotetramer. Heme b is required as a cofactor. Formation of the three residue Trp-Tyr-Met cross-link is important for the catalase, but not the peroxidase activity of the enzyme.

The catalysed reaction is H2O2 + AH2 = A + 2 H2O. It catalyses the reaction 2 H2O2 = O2 + 2 H2O. Functionally, bifunctional enzyme with both catalase and broad-spectrum peroxidase activity. This is Catalase-peroxidase from Jannaschia sp. (strain CCS1).